The following is a 240-amino-acid chain: 1-(5-phosphoribosyl)-5-[(5-phosphoribosylamino)methylideneamino] imidazole-4-carboxamide isomerase (240 aa).

Residue aspartate 8 is the Proton acceptor of the active site. The active-site Proton donor is the aspartate 129.

Belongs to the HisA/HisF family.

The protein resides in the cytoplasm. It catalyses the reaction 1-(5-phospho-beta-D-ribosyl)-5-[(5-phospho-beta-D-ribosylamino)methylideneamino]imidazole-4-carboxamide = 5-[(5-phospho-1-deoxy-D-ribulos-1-ylimino)methylamino]-1-(5-phospho-beta-D-ribosyl)imidazole-4-carboxamide. The protein operates within amino-acid biosynthesis; L-histidine biosynthesis; L-histidine from 5-phospho-alpha-D-ribose 1-diphosphate: step 4/9. This is 1-(5-phosphoribosyl)-5-[(5-phosphoribosylamino)methylideneamino] imidazole-4-carboxamide isomerase from Herpetosiphon aurantiacus (strain ATCC 23779 / DSM 785 / 114-95).